Consider the following 405-residue polypeptide: Phosphoglycerate kinase (405 aa).

Substrate-binding positions include 24–26, Arg40, 63–66, Arg122, and Arg162; these read DFN and HLGR. ATP-binding positions include Lys212, Glu331, and 361–364; that span reads GGDS.

The protein belongs to the phosphoglycerate kinase family. As to quaternary structure, monomer.

It is found in the cytoplasm. The catalysed reaction is (2R)-3-phosphoglycerate + ATP = (2R)-3-phospho-glyceroyl phosphate + ADP. It functions in the pathway carbohydrate degradation; glycolysis; pyruvate from D-glyceraldehyde 3-phosphate: step 2/5. The polypeptide is Phosphoglycerate kinase (Corynebacterium efficiens (strain DSM 44549 / YS-314 / AJ 12310 / JCM 11189 / NBRC 100395)).